The sequence spans 132 residues: ATP synthase epsilon chain (132 aa).

This sequence belongs to the ATPase epsilon chain family. As to quaternary structure, F-type ATPases have 2 components, CF(1) - the catalytic core - and CF(0) - the membrane proton channel. CF(1) has five subunits: alpha(3), beta(3), gamma(1), delta(1), epsilon(1). CF(0) has three main subunits: a, b and c.

The protein localises to the cell membrane. Functionally, produces ATP from ADP in the presence of a proton gradient across the membrane. The polypeptide is ATP synthase epsilon chain (Desulforamulus reducens (strain ATCC BAA-1160 / DSM 100696 / MI-1) (Desulfotomaculum reducens)).